Here is a 54-residue protein sequence, read N- to C-terminus: uncharacterized protein (54 aa).

Residues 21–43 (SYVVCLYMCGSDCACICVLACVV) traverse the membrane as a helical segment.

The protein resides in the membrane. This is an uncharacterized protein from Saccharomyces cerevisiae (strain ATCC 204508 / S288c) (Baker's yeast).